The following is a 455-amino-acid chain: Bifunctional protein GlmU (455 aa).

The interval 1 to 226 is pyrophosphorylase; that stretch reads MGLSVVILAA…EFEILGVNDR (226 aa). UDP-N-acetyl-alpha-D-glucosamine is bound by residues 8 to 11, Lys-22, Gln-73, 78 to 79, 99 to 101, Gly-136, Glu-151, Asn-166, and Asn-224; these read LAAG, GT, and YGD. Asp-101 contacts Mg(2+). Asn-224 contributes to the Mg(2+) binding site. Residues 227–247 are linker; that stretch reads TQLASLERVWQRNVAEKIMAK. The N-acetyltransferase stretch occupies residues 248 to 455; that stretch reads GVSIADPNRF…WQRSVKKTDK (208 aa). Residues Arg-330 and Lys-348 each contribute to the UDP-N-acetyl-alpha-D-glucosamine site. His-360 acts as the Proton acceptor in catalysis. Residues Tyr-363 and Asn-374 each coordinate UDP-N-acetyl-alpha-D-glucosamine. Acetyl-CoA contacts are provided by residues Ala-377, 383 to 384, Ser-402, Ala-420, and Arg-437; that span reads NY.

In the N-terminal section; belongs to the N-acetylglucosamine-1-phosphate uridyltransferase family. This sequence in the C-terminal section; belongs to the transferase hexapeptide repeat family. As to quaternary structure, homotrimer. Requires Mg(2+) as cofactor.

It is found in the cytoplasm. The enzyme catalyses alpha-D-glucosamine 1-phosphate + acetyl-CoA = N-acetyl-alpha-D-glucosamine 1-phosphate + CoA + H(+). It catalyses the reaction N-acetyl-alpha-D-glucosamine 1-phosphate + UTP + H(+) = UDP-N-acetyl-alpha-D-glucosamine + diphosphate. It participates in nucleotide-sugar biosynthesis; UDP-N-acetyl-alpha-D-glucosamine biosynthesis; N-acetyl-alpha-D-glucosamine 1-phosphate from alpha-D-glucosamine 6-phosphate (route II): step 2/2. It functions in the pathway nucleotide-sugar biosynthesis; UDP-N-acetyl-alpha-D-glucosamine biosynthesis; UDP-N-acetyl-alpha-D-glucosamine from N-acetyl-alpha-D-glucosamine 1-phosphate: step 1/1. The protein operates within bacterial outer membrane biogenesis; LPS lipid A biosynthesis. Functionally, catalyzes the last two sequential reactions in the de novo biosynthetic pathway for UDP-N-acetylglucosamine (UDP-GlcNAc). The C-terminal domain catalyzes the transfer of acetyl group from acetyl coenzyme A to glucosamine-1-phosphate (GlcN-1-P) to produce N-acetylglucosamine-1-phosphate (GlcNAc-1-P), which is converted into UDP-GlcNAc by the transfer of uridine 5-monophosphate (from uridine 5-triphosphate), a reaction catalyzed by the N-terminal domain. This chain is Bifunctional protein GlmU, found in Francisella tularensis subsp. tularensis (strain FSC 198).